A 447-amino-acid polypeptide reads, in one-letter code: Argininosuccinate synthase (447 aa).

ATP-binding positions include 17–25 (AFSGGLDTS) and Ala43. Position 99 (Tyr99) interacts with L-citrulline. Gly129 and Thr131 together coordinate ATP. Residues Thr131, Asn135, and Asp136 each coordinate L-aspartate. Asn135 is an L-citrulline binding site. Residue Asp136 coordinates ATP. Residues Arg139 and Ser192 each coordinate L-citrulline. Asp194 serves as a coordination point for ATP. 3 residues coordinate L-citrulline: Thr201, Glu203, and Glu280.

The protein belongs to the argininosuccinate synthase family. Type 2 subfamily. As to quaternary structure, homotetramer.

Its subcellular location is the cytoplasm. The enzyme catalyses L-citrulline + L-aspartate + ATP = 2-(N(omega)-L-arginino)succinate + AMP + diphosphate + H(+). Its pathway is amino-acid biosynthesis; L-arginine biosynthesis; L-arginine from L-ornithine and carbamoyl phosphate: step 2/3. The polypeptide is Argininosuccinate synthase (Klebsiella pneumoniae subsp. pneumoniae (strain ATCC 700721 / MGH 78578)).